The chain runs to 546 residues: 2-isopropylmalate synthase (546 aa).

In terms of domain architecture, Pyruvate carboxyltransferase spans Ile5–Thr274. 4 residues coordinate Mn(2+): Asp14, His209, His211, and Asn245. The segment at Arg415–Glu546 is regulatory domain.

It belongs to the alpha-IPM synthase/homocitrate synthase family. LeuA type 1 subfamily. Homodimer. Mn(2+) serves as cofactor.

Its subcellular location is the cytoplasm. It carries out the reaction 3-methyl-2-oxobutanoate + acetyl-CoA + H2O = (2S)-2-isopropylmalate + CoA + H(+). The protein operates within amino-acid biosynthesis; L-leucine biosynthesis; L-leucine from 3-methyl-2-oxobutanoate: step 1/4. Functionally, catalyzes the condensation of the acetyl group of acetyl-CoA with 3-methyl-2-oxobutanoate (2-ketoisovalerate) to form 3-carboxy-3-hydroxy-4-methylpentanoate (2-isopropylmalate). The polypeptide is 2-isopropylmalate synthase (Salinibacter ruber (strain M8)).